We begin with the raw amino-acid sequence, 210 residues long: Two-component response regulator ORR7 (210 aa).

A disordered region spans residues 53-92 (VVPLHDNASAEDDDDDEEDDDEDDDDDDDEDDEEEAAPPY). The segment covering 61–88 (SAEDDDDDEEDDDEDDDDDDDEDDEEEA) has biased composition (acidic residues). The Response regulatory domain occupies 92-205 (YVMAVDDSSV…VRPADISRIT (114 aa)). D142 carries the 4-aspartylphosphate modification.

Belongs to the ARR family. Type-A subfamily. Post-translationally, two-component system major event consists of a His-to-Asp phosphorelay between a sensor histidine kinase (HK) and a response regulator (RR). In plants, the His-to-Asp phosphorelay involves an additional intermediate named Histidine-containing phosphotransfer protein (HPt). This multistep phosphorelay consists of a His-Asp-His-Asp sequential transfer of a phosphate group between first a His and an Asp of the HK protein, followed by the transfer to a conserved His of the HPt protein and finally the transfer to an Asp in the receiver domain of the RR protein.

Functions as a response regulator involved in His-to-Asp phosphorelay signal transduction system. Phosphorylation of the Asp residue in the receiver domain activates the ability of the protein to promote the transcription of target genes. Type-A response regulators seem to act as negative regulators of the cytokinin signaling. In Oryza sativa subsp. japonica (Rice), this protein is Two-component response regulator ORR7.